A 1103-amino-acid polypeptide reads, in one-letter code: Isoleucine--tRNA ligase (1103 aa).

Residues 1-25 form a disordered region; it reads MSENVYPKANEGGETAHVAPNPSFP. The 'HIGH' region signature appears at 65–75; it reads PFANGLPHYGH. The short motif at 649–653 is the 'KMSKS' region element; that stretch reads KMSKH. K652 provides a ligand contact to ATP.

The protein belongs to the class-I aminoacyl-tRNA synthetase family. IleS type 2 subfamily. Monomer. Requires Zn(2+) as cofactor.

It localises to the cytoplasm. It catalyses the reaction tRNA(Ile) + L-isoleucine + ATP = L-isoleucyl-tRNA(Ile) + AMP + diphosphate. In terms of biological role, catalyzes the attachment of isoleucine to tRNA(Ile). As IleRS can inadvertently accommodate and process structurally similar amino acids such as valine, to avoid such errors it has two additional distinct tRNA(Ile)-dependent editing activities. One activity is designated as 'pretransfer' editing and involves the hydrolysis of activated Val-AMP. The other activity is designated 'posttransfer' editing and involves deacylation of mischarged Val-tRNA(Ile). This Bifidobacterium longum (strain NCC 2705) protein is Isoleucine--tRNA ligase.